The sequence spans 219 residues: Cytidylate kinase (219 aa).

21-29 (GPAASGKGT) serves as a coordination point for ATP.

It belongs to the cytidylate kinase family. Type 1 subfamily.

It localises to the cytoplasm. It catalyses the reaction CMP + ATP = CDP + ADP. The catalysed reaction is dCMP + ATP = dCDP + ADP. This is Cytidylate kinase from Rickettsia africae (strain ESF-5).